Reading from the N-terminus, the 196-residue chain is Protease (196 aa).

Active-site residues include histidine 54, aspartate 70, and cysteine 121.

It belongs to the peptidase C5 family. In terms of assembly, interacts with protease cofactor pVI-C; this interaction is necessary for protease activation.

It localises to the virion. The protein localises to the host nucleus. It carries out the reaction Cleaves proteins of the adenovirus and its host cell at two consensus sites: -Yaa-Xaa-Gly-Gly-|-Xaa- and -Yaa-Xaa-Gly-Xaa-|-Gly- (in which Yaa is Met, Ile or Leu, and Xaa is any amino acid).. With respect to regulation, requires DNA and protease cofactor for maximal activation. Inside nascent virions, becomes partially activated by binding to the viral DNA, allowing it to cleave the cofactor that binds to the protease and fully activates it. Actin, like the viral protease cofactor, seems to act as a cofactor in the cleavage of cytokeratin 18 and of actin itself. In terms of biological role, cleaves viral precursor proteins (pTP, pIIIa, pVI, pVII, pVIII, and pX) inside newly assembled particles giving rise to mature virions. Protease complexed to its cofactor slides along the viral DNA to specifically locate and cleave the viral precursors. Mature virions have a weakened organization compared to the unmature virions, thereby facilitating subsequent uncoating. Without maturation, the particle lacks infectivity and is unable to uncoat. Late in adenovirus infection, in the cytoplasm, may participate in the cytoskeleton destruction. Cleaves host cell cytoskeletal keratins K7 and K18. In Bos taurus (Bovine), this protein is Protease.